Consider the following 393-residue polypeptide: Lysine/ornithine decarboxylase (393 aa).

Residue lysine 51 is modified to N6-(pyridoxal phosphate)lysine. Residue cysteine 323 is the Proton donor; shared with dimeric partner of the active site.

This sequence belongs to the Orn/Lys/Arg decarboxylase class-II family. Homodimer. Requires pyridoxal 5'-phosphate as cofactor.

The enzyme catalyses L-lysine + H(+) = cadaverine + CO2. It carries out the reaction L-ornithine + H(+) = putrescine + CO2. Its pathway is amine and polyamine biosynthesis; putrescine biosynthesis via L-ornithine pathway; putrescine from L-ornithine: step 1/1. Inhibited competitively by both alpha-difluoromethyllysine and alpha-difluoromethylornithine. Functionally, decarboxylates both L-lysine and L-ornithine with similar catalytic efficiency. This Selenomonas ruminantium protein is Lysine/ornithine decarboxylase (ldc).